The primary structure comprises 244 residues: Small ribosomal subunit protein eS4 (244 aa).

Residues 37-123 (VPLAILLKYY…AKYKFVRIMN (87 aa)) enclose the S4 RNA-binding domain.

The protein belongs to the eukaryotic ribosomal protein eS4 family.

This chain is Small ribosomal subunit protein eS4 (rps4e), found in Sulfolobus acidocaldarius (strain ATCC 33909 / DSM 639 / JCM 8929 / NBRC 15157 / NCIMB 11770).